The sequence spans 260 residues: Putative nudix hydrolase 6 (260 aa).

Residues 113–257 (PNHAADPIVS…SHFIDLLKES (145 aa)) form the Nudix hydrolase domain. The Nudix box motif lies at 148-170 (GMVDAGEHVSQTLRREFAEEAMH). Positions 163 and 167 each coordinate Mg(2+).

The protein belongs to the Nudix hydrolase family. It depends on Mg(2+) as a cofactor. Requires Mn(2+) as cofactor.

In terms of biological role, probably mediates the hydrolysis of some nucleoside diphosphate derivatives. The chain is Putative nudix hydrolase 6 (ndx-6) from Caenorhabditis elegans.